The chain runs to 1408 residues: DNA-directed RNA polymerase subunit beta (1408 aa).

The tract at residues 1383–1408 (PERQRSFGGDFLGGGDGEERKTGTEA) is disordered. A compositionally biased stretch (basic and acidic residues) spans 1399 to 1408 (GEERKTGTEA).

It belongs to the RNA polymerase beta chain family. As to quaternary structure, the RNAP catalytic core consists of 2 alpha, 1 beta, 1 beta' and 1 omega subunit. When a sigma factor is associated with the core the holoenzyme is formed, which can initiate transcription.

The enzyme catalyses RNA(n) + a ribonucleoside 5'-triphosphate = RNA(n+1) + diphosphate. Its function is as follows. DNA-dependent RNA polymerase catalyzes the transcription of DNA into RNA using the four ribonucleoside triphosphates as substrates. This is DNA-directed RNA polymerase subunit beta from Myxococcus xanthus (strain DK1622).